Here is a 762-residue protein sequence, read N- to C-terminus: 5-methyltetrahydropteroyltriglutamate--homocysteine methyltransferase (762 aa).

5-methyltetrahydropteroyltri-L-glutamate contacts are provided by residues 17–20 (REWK) and Lys111. Residues 435 to 437 (IGS) and Glu488 contribute to the L-homocysteine site. Residues 435–437 (IGS) and Glu488 contribute to the L-methionine site. 5-methyltetrahydropteroyltri-L-glutamate-binding positions include 519–520 (RC) and Trp565. Asp603 lines the L-homocysteine pocket. Residue Asp603 coordinates L-methionine. Glu609 provides a ligand contact to 5-methyltetrahydropteroyltri-L-glutamate. Residues His645, Cys647, and Glu669 each coordinate Zn(2+). Catalysis depends on His698, which acts as the Proton donor. Cys730 provides a ligand contact to Zn(2+).

Belongs to the vitamin-B12 independent methionine synthase family. Requires Zn(2+) as cofactor.

The catalysed reaction is 5-methyltetrahydropteroyltri-L-glutamate + L-homocysteine = tetrahydropteroyltri-L-glutamate + L-methionine. Its pathway is amino-acid biosynthesis; L-methionine biosynthesis via de novo pathway; L-methionine from L-homocysteine (MetE route): step 1/1. Its function is as follows. Catalyzes the transfer of a methyl group from 5-methyltetrahydrofolate to homocysteine resulting in methionine formation. The protein is 5-methyltetrahydropteroyltriglutamate--homocysteine methyltransferase of Bacillus cereus (strain ATCC 10987 / NRS 248).